We begin with the raw amino-acid sequence, 275 residues long: Large ribosomal subunit protein uL2 (275 aa).

A disordered region spans residues 223 to 275; the sequence is GVVMNPVDHPHGGGEGRGKGHHPQSPWGVPAKGYKTRRGKRASDKFIVRRRNG. Residues 230–240 are compositionally biased toward basic and acidic residues; the sequence is DHPHGGGEGRG.

This sequence belongs to the universal ribosomal protein uL2 family. Part of the 50S ribosomal subunit. Forms a bridge to the 30S subunit in the 70S ribosome.

One of the primary rRNA binding proteins. Required for association of the 30S and 50S subunits to form the 70S ribosome, for tRNA binding and peptide bond formation. It has been suggested to have peptidyltransferase activity; this is somewhat controversial. Makes several contacts with the 16S rRNA in the 70S ribosome. In Fervidobacterium nodosum (strain ATCC 35602 / DSM 5306 / Rt17-B1), this protein is Large ribosomal subunit protein uL2.